The sequence spans 42 residues: Delta-actinopoditoxin-Mb1a (42 aa).

Disulfide bonds link Cys1–Cys15, Cys8–Cys20, Cys14–Cys31, and Cys16–Cys42.

The protein belongs to the neurotoxin 06 (delta-actx) family. In terms of tissue distribution, expressed by the venom gland.

The protein resides in the secreted. In terms of biological role, neurotoxin that slows the inactivation of vertebrate tetrodotoxin-sensitive voltage-gated sodium channels (Nav) and most likely insect sodium channels presumably by binding to site 3 of the channel. Effects are an increase in resting tension, a muscle fasciculation and a decrease in indirect twitch tension. It fails to affect tetrodotoxin-resistant sodium currents. In vivo, is lethal to both vertebrates and insects. This Missulena bradleyi (Eastern mouse spider) protein is Delta-actinopoditoxin-Mb1a.